The following is a 183-amino-acid chain: uncharacterized protein (183 aa).

Belongs to the asfivirus S183L family.

This is an uncharacterized protein from Ornithodoros (relapsing fever ticks).